We begin with the raw amino-acid sequence, 325 residues long: Transaldolase (325 aa).

Lys-125 functions as the Schiff-base intermediate with substrate in the catalytic mechanism.

Belongs to the transaldolase family. Type 2 subfamily.

The protein resides in the cytoplasm. It catalyses the reaction D-sedoheptulose 7-phosphate + D-glyceraldehyde 3-phosphate = D-erythrose 4-phosphate + beta-D-fructose 6-phosphate. It participates in carbohydrate degradation; pentose phosphate pathway; D-glyceraldehyde 3-phosphate and beta-D-fructose 6-phosphate from D-ribose 5-phosphate and D-xylulose 5-phosphate (non-oxidative stage): step 2/3. Transaldolase is important for the balance of metabolites in the pentose-phosphate pathway. This Campylobacter jejuni subsp. jejuni serotype O:23/36 (strain 81-176) protein is Transaldolase.